Reading from the N-terminus, the 864-residue chain is Leucine--tRNA ligase (864 aa).

A 'HIGH' region motif is present at residues 47-57 (PYPSGNLHMGH). Positions 298–317 (SEQDRVADDRPKRGVATGGT) are disordered. Positions 299–309 (EQDRVADDRPK) are enriched in basic and acidic residues. The 'KMSKS' region motif lies at 622–626 (KMSKS). K625 is a binding site for ATP.

This sequence belongs to the class-I aminoacyl-tRNA synthetase family.

Its subcellular location is the cytoplasm. The enzyme catalyses tRNA(Leu) + L-leucine + ATP = L-leucyl-tRNA(Leu) + AMP + diphosphate. The sequence is that of Leucine--tRNA ligase from Synechococcus sp. (strain RCC307).